Consider the following 357-residue polypeptide: Adenosine deaminase (357 aa).

His-16 and His-18 together coordinate Zn(2+). Substrate is bound by residues His-18, Asp-20, and Gly-185. His-212 is a Zn(2+) binding site. Glu-215 serves as the catalytic Proton donor. Residue Asp-294 coordinates Zn(2+). Asp-295 serves as a coordination point for substrate.

It belongs to the metallo-dependent hydrolases superfamily. Adenosine and AMP deaminases family. Requires Zn(2+) as cofactor.

It localises to the cell membrane. The protein resides in the cell junction. Its subcellular location is the cytoplasmic vesicle lumen. It is found in the cytoplasm. The protein localises to the lysosome. The catalysed reaction is adenosine + H2O + H(+) = inosine + NH4(+). It catalyses the reaction 2'-deoxyadenosine + H2O + H(+) = 2'-deoxyinosine + NH4(+). Its function is as follows. Catalyzes the hydrolytic deamination of adenosine and 2-deoxyadenosine. Plays an important role in purine metabolism and in adenosine homeostasis. Modulates signaling by extracellular adenosine, and so contributes indirectly to cellular signaling events. May act as a positive regulator of T-cell coactivation. This is Adenosine deaminase (ADA) from Gallus gallus (Chicken).